Here is a 306-residue protein sequence, read N- to C-terminus: Small ribosomal subunit protein uS2 (306 aa).

Serine 2 is subject to N-acetylserine. Laminin-binding regions lie at residues 161 to 180 and 205 to 229; these read IPCNNKGAHSVGLMWWMLAR and RDPEEIEKEEQAAAEKATTKEEYQG. [DE]-W-[ST] repeat units follow at residues 230–232, 245–247, 276–278, 286–288, and 304–306; these read EWT, DWS, and EWS. The laminin-binding stretch occupies residues 242–306; that stretch reads EVADWSEGVQ…EWTGTTTEWS (65 aa). The disordered stretch occupies residues 261-306; that stretch reads PAERPEIPAAKPAAEDWSSQPASTDDWSAAPTAQASEWTGTTTEWS. Positions 277-306 are enriched in polar residues; sequence WSSQPASTDDWSAAPTAQASEWTGTTTEWS.

This sequence belongs to the universal ribosomal protein uS2 family. Monomer (37LRP) and homodimer (67LR). Component of the small ribosomal subunit. Mature ribosomes consist of a small (40S) and a large (60S) subunit. The 40S subunit contains about 33 different proteins and 1 molecule of RNA (18S). The 60S subunit contains about 49 different proteins and 3 molecules of RNA (28S, 5.8S and 5S). Interacts with rps21. Interacts with several laminins including at least lamb1. Interacts with mdk. In terms of processing, acylated. Acylation may be a prerequisite for conversion of the monomeric 37 kDa laminin receptor precursor (37LRP) to the mature dimeric 67 kDa laminin receptor (67LR), and may provide a mechanism for membrane association. Cleaved by stromelysin-3 (ST3) at the cell surface. Cleavage by stromelysin-3 may be a mechanism to alter cell-extracellular matrix interactions.

Its subcellular location is the cell membrane. It is found in the cytoplasm. It localises to the nucleus. Its function is as follows. Required for the assembly and/or stability of the 40S ribosomal subunit. Required for the processing of the 20S rRNA-precursor to mature 18S rRNA in a late step of the maturation of 40S ribosomal subunits. Also functions as a cell surface receptor for laminin. Plays a role in cell adhesion to the basement membrane and in the consequent activation of signaling transduction pathways. May play a role in cell fate determination and tissue morphogenesis. This is Small ribosomal subunit protein uS2 (rpsa) from Xenopus tropicalis (Western clawed frog).